The chain runs to 492 residues: Pre-mRNA-processing factor 19 (492 aa).

Residues 1-72 (MSFVCGISGE…APRNVSGTSI (72 aa)) form the U-box domain. 6 WD repeats span residues 207–246 (HSTG…VMQT), 249–288 (GHNK…SKAI), 291–330 (VHQA…SLCK), 336–375 (GSQI…VAAA), 378–417 (GHTA…NLKT), and 461–491 (DHSG…RVFS).

The protein belongs to the WD repeat PRP19 family. In terms of assembly, homotetramer. Component of the NTC complex (or PRP19-associated complex) which is associated with the spliceosome.

The protein resides in the nucleus. Its subcellular location is the nucleoplasm. It catalyses the reaction S-ubiquitinyl-[E2 ubiquitin-conjugating enzyme]-L-cysteine + [acceptor protein]-L-lysine = [E2 ubiquitin-conjugating enzyme]-L-cysteine + N(6)-ubiquitinyl-[acceptor protein]-L-lysine.. It participates in protein modification; protein ubiquitination. Probable ubiquitin-protein ligase which is mainly involved pre-mRNA splicing and DNA repair. Core component of the NTC/Nineteen complex which is part of the spliceosome and participates in its assembly, its remodeling and is required for its activity. Together with emb-4, necessary for interaction of rnp-4, a probable exon junction complex component, with mRNAs and spliceosomal snRNAs. Plays a role in nuclear retention of unspliced mRNAs. In Caenorhabditis elegans, this protein is Pre-mRNA-processing factor 19 (prp-19).